A 443-amino-acid chain; its full sequence is Ribosomal protein uS12 methylthiotransferase RimO (443 aa).

The MTTase N-terminal domain occupies Pro5–Gln116. [4Fe-4S] cluster contacts are provided by Cys14, Cys50, Cys79, Cys154, Cys158, and Cys161. The Radical SAM core domain maps to Thr140–Gln369. A TRAM domain is found at Ala372–Glu438.

This sequence belongs to the methylthiotransferase family. RimO subfamily. The cofactor is [4Fe-4S] cluster.

It localises to the cytoplasm. It carries out the reaction L-aspartate(89)-[ribosomal protein uS12]-hydrogen + (sulfur carrier)-SH + AH2 + 2 S-adenosyl-L-methionine = 3-methylsulfanyl-L-aspartate(89)-[ribosomal protein uS12]-hydrogen + (sulfur carrier)-H + 5'-deoxyadenosine + L-methionine + A + S-adenosyl-L-homocysteine + 2 H(+). Its function is as follows. Catalyzes the methylthiolation of an aspartic acid residue of ribosomal protein uS12. This Synechocystis sp. (strain ATCC 27184 / PCC 6803 / Kazusa) protein is Ribosomal protein uS12 methylthiotransferase RimO.